The following is a 472-amino-acid chain: Aspartyl/glutamyl-tRNA(Asn/Gln) amidotransferase subunit B (472 aa).

The protein belongs to the GatB/GatE family. GatB subfamily. In terms of assembly, heterotrimer of A, B and C subunits.

The enzyme catalyses L-glutamyl-tRNA(Gln) + L-glutamine + ATP + H2O = L-glutaminyl-tRNA(Gln) + L-glutamate + ADP + phosphate + H(+). The catalysed reaction is L-aspartyl-tRNA(Asn) + L-glutamine + ATP + H2O = L-asparaginyl-tRNA(Asn) + L-glutamate + ADP + phosphate + 2 H(+). Its function is as follows. Allows the formation of correctly charged Asn-tRNA(Asn) or Gln-tRNA(Gln) through the transamidation of misacylated Asp-tRNA(Asn) or Glu-tRNA(Gln) in organisms which lack either or both of asparaginyl-tRNA or glutaminyl-tRNA synthetases. The reaction takes place in the presence of glutamine and ATP through an activated phospho-Asp-tRNA(Asn) or phospho-Glu-tRNA(Gln). This Campylobacter jejuni subsp. doylei (strain ATCC BAA-1458 / RM4099 / 269.97) protein is Aspartyl/glutamyl-tRNA(Asn/Gln) amidotransferase subunit B.